A 463-amino-acid polypeptide reads, in one-letter code: Methionine aminopeptidase 2-1 (463 aa).

A disordered region spans residues 1–98; it reads MGSKTPEEQI…PPRVPLSDLF (98 aa). Residues 30–45 show a composition bias toward basic and acidic residues; it reads RGTHLSRDGDGSLGDH. Positions 46–55 are enriched in acidic residues; that stretch reads GDDDDADEDD. Over residues 69-81 the composition is skewed to basic residues; that stretch reads KKKKRPKKKKKPA. Substrate is bound at residue His214. A divalent metal cation contacts are provided by Asp235, Asp246, and His315. Residue His323 coordinates substrate. Residues Glu348 and Glu444 each coordinate a divalent metal cation.

It belongs to the peptidase M24A family. Methionine aminopeptidase eukaryotic type 2 subfamily. It depends on Co(2+) as a cofactor. Zn(2+) serves as cofactor. The cofactor is Mn(2+). Requires Fe(2+) as cofactor.

It is found in the cytoplasm. It catalyses the reaction Release of N-terminal amino acids, preferentially methionine, from peptides and arylamides.. Functionally, cotranslationally removes the N-terminal methionine from nascent proteins. The N-terminal methionine is often cleaved when the second residue in the primary sequence is small and uncharged (Met-Ala-, Cys, Gly, Pro, Ser, Thr, or Val). The protein is Methionine aminopeptidase 2-1 of Colletotrichum graminicola (strain M1.001 / M2 / FGSC 10212) (Maize anthracnose fungus).